The sequence spans 222 residues: Prolactin-2C5 (222 aa).

The N-terminal stretch at 1–29 is a signal peptide; sequence MLPSLIQPCSWILLLLLVNSSLLWKNVAS. The cysteines at positions 33 and 40 are disulfide-linked. N57 carries N-linked (GlcNAc...) asparagine glycosylation. Cystine bridges form between C87–C197 and C214–C222.

It belongs to the somatotropin/prolactin family. N-glycosylated and sialylated. In terms of tissue distribution, expressed in placenta (at protein level). Expressed in the tail hair follicle, with highest expression detected in the keratinocytes of the outer root sheath. Expressed in ear skin with lesser amounts in small intestine. Not detected in brain at 18 dpc, postnatal day 25 or postnatal day 55.

The protein localises to the secreted. The protein is Prolactin-2C5 of Mus musculus (Mouse).